The chain runs to 452 residues: Glycoprotein endo-alpha-1,2-mannosidase-like protein (452 aa).

The Cytoplasmic portion of the chain corresponds to 1–8; the sequence is MARRRRRA. A helical; Signal-anchor for type II membrane protein transmembrane segment spans residues 9–29; the sequence is CIALFLVLLFAFGTLMGLRTL. Residues 30-452 lie on the Lumenal side of the membrane; it reads KAPDGLPALG…FIKEKEQWLM (423 aa). Positions 40-90 are disordered; that stretch reads PGPELAPFERRPEGNPAPARAPAAPAAPPPPPPRTAAPRASLGPAEADPAP. Residues 64 to 74 are compositionally biased toward pro residues; it reads PAAPPPPPPRT.

It belongs to the glycosyl hydrolase 99 family.

The protein localises to the golgi apparatus membrane. This chain is Glycoprotein endo-alpha-1,2-mannosidase-like protein (Maneal), found in Mus musculus (Mouse).